Reading from the N-terminus, the 316-residue chain is Ribosomal RNA small subunit methyltransferase H (316 aa).

Residues 35-37, D55, F79, D101, and Q108 each bind S-adenosyl-L-methionine; that span reads GGH. The segment at 291 to 316 is disordered; that stretch reads AIKPSKDEVDENTRSRSSVLRIAEKL. Positions 294-304 are enriched in basic and acidic residues; sequence PSKDEVDENTR.

The protein belongs to the methyltransferase superfamily. RsmH family.

Its subcellular location is the cytoplasm. The enzyme catalyses cytidine(1402) in 16S rRNA + S-adenosyl-L-methionine = N(4)-methylcytidine(1402) in 16S rRNA + S-adenosyl-L-homocysteine + H(+). In terms of biological role, specifically methylates the N4 position of cytidine in position 1402 (C1402) of 16S rRNA. The protein is Ribosomal RNA small subunit methyltransferase H of Vibrio atlanticus (strain LGP32) (Vibrio splendidus (strain Mel32)).